A 183-amino-acid chain; its full sequence is Peptide deformylase-like (183 aa).

The active site involves E140.

This sequence belongs to the polypeptide deformylase family.

This is Peptide deformylase-like from Rickettsia conorii (strain ATCC VR-613 / Malish 7).